We begin with the raw amino-acid sequence, 103 residues long: Host transcription reprogramming factor 6 (103 aa).

A signal peptide spans 1–19 (MRATTAFQVIAFLAVGAAA). Residues 66–92 (YWCPNQVCAKTFATQEERDHHIANTVH) form a C2H2-type zinc finger. Residues 82 to 103 (ERDHHIANTVHPTNSKRDVLLQ) form a disordered region.

The protein localises to the secreted. It localises to the host nucleus. Its function is as follows. Probable secreted effector that translocates into the nuclei of host cells to reprogram the expression of targeted genes by binding on effector binding elements in rice. This is Host transcription reprogramming factor 6 from Pyricularia oryzae (strain 70-15 / ATCC MYA-4617 / FGSC 8958) (Rice blast fungus).